The chain runs to 519 residues: Ribonuclease Y 1 (519 aa).

The chain crosses the membrane as a helical span at residues 2–22 (IILYIILAIIAIVVGYCAGFF). Residues 84-113 (QKQEDRLLQREDSLDRKDNSFEKRENSLER) form a disordered region. The KH domain occupies 209–294 (TITVVSLPND…EMVEKAKKEM (86 aa)). Residues 335 to 428 (VLNHSIEVAN…VAAANSISAA (94 aa)) enclose the HD domain.

It belongs to the RNase Y family.

It localises to the cell membrane. Its function is as follows. Endoribonuclease that initiates mRNA decay. This Pediococcus pentosaceus (strain ATCC 25745 / CCUG 21536 / LMG 10740 / 183-1w) protein is Ribonuclease Y 1.